A 410-amino-acid chain; its full sequence is Na(+)-translocating NADH-quinone reductase subunit B (410 aa).

Helical transmembrane passes span 56 to 76 (MMILVWLALFPAMFYGMYNVG), 119 to 139 (LFGAIYFLPIYATVFVVGGFW), and 159 to 179 (SILFALIVPPTLPLWQAALGI). Thr-232 is subject to FMN phosphoryl threonine. 5 helical membrane-spanning segments follow: residues 266 to 286 (GSIGEVSTLALLIGGAFIVFA), 293 to 313 (IIAGVMIGMIAMSSLFNFIGS), 318 to 338 (MFAMPWYWHLVVGGFAIGMLF), 347 to 367 (SFTNVGKWWYGALIGVMCVLI), and 377 to 397 (GMMLAILFANLFAPIFDYFVA).

The protein belongs to the NqrB/RnfD family. As to quaternary structure, composed of six subunits; NqrA, NqrB, NqrC, NqrD, NqrE and NqrF. It depends on FMN as a cofactor.

It is found in the cell inner membrane. It carries out the reaction a ubiquinone + n Na(+)(in) + NADH + H(+) = a ubiquinol + n Na(+)(out) + NAD(+). NQR complex catalyzes the reduction of ubiquinone-1 to ubiquinol by two successive reactions, coupled with the transport of Na(+) ions from the cytoplasm to the periplasm. NqrA to NqrE are probably involved in the second step, the conversion of ubisemiquinone to ubiquinol. In Neisseria meningitidis serogroup B (strain ATCC BAA-335 / MC58), this protein is Na(+)-translocating NADH-quinone reductase subunit B.